A 144-amino-acid chain; its full sequence is Protein CT_635 (144 aa).

The tract at residues 110–144 is disordered; that stretch reads EVTNDIGHSSHKSPTPKKTKSSSQKKSKKKNWIPL. Residues 118–144 show a composition bias toward basic residues; that stretch reads SSHKSPTPKKTKSSSQKKSKKKNWIPL.

The protein belongs to the chlamydial CPn_0742/CT_635/TC_0003 family.

The sequence is that of Protein CT_635 from Chlamydia trachomatis serovar D (strain ATCC VR-885 / DSM 19411 / UW-3/Cx).